The sequence spans 344 residues: Heat-inducible transcription repressor hrcA (344 aa).

It belongs to the HrcA family.

In terms of biological role, negative regulator of class I heat shock genes (grpE-dnaK-dnaJ and groELS operons). Prevents heat-shock induction of these operons. This is Heat-inducible transcription repressor hrcA from Streptococcus pyogenes serotype M3 (strain ATCC BAA-595 / MGAS315).